We begin with the raw amino-acid sequence, 154 residues long: 6,7-dimethyl-8-ribityllumazine synthase (154 aa).

Residues F22, 56–58 (AFE), and 80–82 (AVI) contribute to the 5-amino-6-(D-ribitylamino)uracil site. 85–86 (AT) contacts (2S)-2-hydroxy-3-oxobutyl phosphate. The Proton donor role is filled by H88. 5-amino-6-(D-ribitylamino)uracil is bound at residue F113. R127 provides a ligand contact to (2S)-2-hydroxy-3-oxobutyl phosphate.

The protein belongs to the DMRL synthase family.

The enzyme catalyses (2S)-2-hydroxy-3-oxobutyl phosphate + 5-amino-6-(D-ribitylamino)uracil = 6,7-dimethyl-8-(1-D-ribityl)lumazine + phosphate + 2 H2O + H(+). The protein operates within cofactor biosynthesis; riboflavin biosynthesis; riboflavin from 2-hydroxy-3-oxobutyl phosphate and 5-amino-6-(D-ribitylamino)uracil: step 1/2. Functionally, catalyzes the formation of 6,7-dimethyl-8-ribityllumazine by condensation of 5-amino-6-(D-ribitylamino)uracil with 3,4-dihydroxy-2-butanone 4-phosphate. This is the penultimate step in the biosynthesis of riboflavin. The chain is 6,7-dimethyl-8-ribityllumazine synthase from Syntrophobacter fumaroxidans (strain DSM 10017 / MPOB).